Here is a 57-residue protein sequence, read N- to C-terminus: Small ribosomal subunit protein bS21 (57 aa).

Positions 32-42 (VRRREHYEKPS) are enriched in basic and acidic residues. A disordered region spans residues 32–57 (VRRREHYEKPSQRRKRKLEASRRRRR). A compositionally biased stretch (basic residues) spans 43–57 (QRRKRKLEASRRRRR).

The protein belongs to the bacterial ribosomal protein bS21 family.

The sequence is that of Small ribosomal subunit protein bS21 from Synechococcus elongatus (strain ATCC 33912 / PCC 7942 / FACHB-805) (Anacystis nidulans R2).